The chain runs to 59 residues: Three-finger toxin MS1 (59 aa).

Cystine bridges form between C3/C22, C17/C39, C41/C52, and C53/C58.

It belongs to the three-finger toxin family. Short-chain subfamily. Type I alpha-neurotoxin sub-subfamily. Expressed by the venom gland.

It localises to the secreted. In terms of biological role, produces peripheral paralysis by blocking neuromuscular transmission at the postsynaptic site. Binds to and inhibits the endogenous nicotinic acetylcholine receptors (nAChR) in human rhabdomyosarcoma TE 671 cell line with an IC(50) of 48.2 mM. This neurotoxin is lethal to mice by intraperitoneal injection and to zebrafish by injection at the back of the dorsolateral region. The sequence is that of Three-finger toxin MS1 from Micrurus surinamensis (Surinam coral snake).